Here is a 393-residue protein sequence, read N- to C-terminus: Protein FAM53C (393 aa).

N-acetylmethionine is present on Met-1. Residues 77–120 (HLRPPSRGNSPKEPPLSQVLSPEPPDPEKLPVPPAPPSKRHCRS) form a disordered region. 2 positions are modified to phosphoserine: Ser-122 and Ser-162. Disordered stretches follow at residues 141–167 (LWTP…PKRV) and 204–283 (QPCA…ARKT). Over residues 204–215 (QPCATSPQSGSW) the composition is skewed to polar residues. Phosphoserine occurs at positions 232, 234, 255, 273, and 299. The segment covering 241–256 (ASRFLPSARSSPASSP) has biased composition (low complexity). A compositionally biased stretch (low complexity) spans 343–355 (SCSPVEGSSQVLS). Positions 343–365 (SCSPVEGSSQVLSESEEEEEGSV) are disordered.

It belongs to the FAM53 family.

In Mus musculus (Mouse), this protein is Protein FAM53C.